Consider the following 356-residue polypeptide: Protein pelota homolog (356 aa).

It belongs to the eukaryotic release factor 1 family. Pelota subfamily. Monomer. It depends on a divalent metal cation as a cofactor.

The protein localises to the cytoplasm. Functionally, may function in recognizing stalled ribosomes, interact with stem-loop structures in stalled mRNA molecules, and effect endonucleolytic cleavage of the mRNA. May play a role in the release non-functional ribosomes and degradation of damaged mRNAs. Has endoribonuclease activity. The polypeptide is Protein pelota homolog (Pyrococcus furiosus (strain ATCC 43587 / DSM 3638 / JCM 8422 / Vc1)).